Consider the following 81-residue polypeptide: WPRGPDYTERRVMCGLQYVRAAISICGPNMQTMRPRNGSGPIVPPPDFLAMYGMARYKPPLSKKCCSTGCNREDFRGYCYL.

3 disulfides stabilise this stretch: C14–C66, C26–C79, and C65–C70. A glycan (N-linked (GlcNAc...) asparagine) is linked at N37.

The protein belongs to the insulin family. As to quaternary structure, heterodimer of a B chain and an A chain linked by two disulfide bonds.

It is found in the secreted. In terms of biological role, uncertain. This chain is Relaxin-like protein AGF, found in Hypanus sabinus (Atlantic stingray).